The sequence spans 89 residues: Large ribosomal subunit protein eL34 (89 aa).

The interval 1–29 is disordered; sequence MSAPRFRNGTFKRTLKRVPGGRKVEHYKK. Positions 13 to 29 are enriched in basic residues; it reads RTLKRVPGGRKVEHYKK.

This sequence belongs to the eukaryotic ribosomal protein eL34 family.

The polypeptide is Large ribosomal subunit protein eL34 (Methanosphaera stadtmanae (strain ATCC 43021 / DSM 3091 / JCM 11832 / MCB-3)).